We begin with the raw amino-acid sequence, 114 residues long: uncharacterized protein (114 aa).

One can recognise an HIT domain in the interval 6-114 (IFKNIIQRKI…LGGKKLKSFS (109 aa)).

This is an uncharacterized protein from Buchnera aphidicola subsp. Acyrthosiphon pisum (strain APS) (Acyrthosiphon pisum symbiotic bacterium).